Reading from the N-terminus, the 422-residue chain is Glutamyl-tRNA reductase (422 aa).

Residues Thr-49–Arg-52, Ser-107, Glu-112–Gln-114, and Gln-118 each bind substrate. Catalysis depends on Cys-50, which acts as the Nucleophile. NADP(+) is bound at residue Gly-187 to Ile-192.

Belongs to the glutamyl-tRNA reductase family. Homodimer.

The catalysed reaction is (S)-4-amino-5-oxopentanoate + tRNA(Glu) + NADP(+) = L-glutamyl-tRNA(Glu) + NADPH + H(+). It functions in the pathway porphyrin-containing compound metabolism; protoporphyrin-IX biosynthesis; 5-aminolevulinate from L-glutamyl-tRNA(Glu): step 1/2. Its function is as follows. Catalyzes the NADPH-dependent reduction of glutamyl-tRNA(Glu) to glutamate 1-semialdehyde (GSA). The protein is Glutamyl-tRNA reductase of Pseudomonas aeruginosa (strain ATCC 15692 / DSM 22644 / CIP 104116 / JCM 14847 / LMG 12228 / 1C / PRS 101 / PAO1).